The sequence spans 293 residues: Elongation factor Ts (293 aa).

Residues 80-83 (TDFV) form an involved in Mg(2+) ion dislocation from EF-Tu region.

This sequence belongs to the EF-Ts family.

It is found in the cytoplasm. Its function is as follows. Associates with the EF-Tu.GDP complex and induces the exchange of GDP to GTP. It remains bound to the aminoacyl-tRNA.EF-Tu.GTP complex up to the GTP hydrolysis stage on the ribosome. This is Elongation factor Ts from Lacticaseibacillus casei (strain BL23) (Lactobacillus casei).